Consider the following 245-residue polypeptide: Purine nucleoside phosphorylase (245 aa).

His-8 lines the a purine D-ribonucleoside pocket. Residues 24–28 (GDPGR), Arg-46, and 89–92 (RAGS) each bind phosphate. 184–185 (ME) lines the a purine D-ribonucleoside pocket. The active-site Proton donor is the Asp-207.

This sequence belongs to the PNP/MTAP phosphorylase family. Homohexamer; trimer of homodimers.

The enzyme catalyses inosine + phosphate = alpha-D-ribose 1-phosphate + hypoxanthine. The catalysed reaction is guanosine + phosphate = alpha-D-ribose 1-phosphate + guanine. It carries out the reaction 2'-deoxyguanosine + phosphate = 2-deoxy-alpha-D-ribose 1-phosphate + guanine. It catalyses the reaction 2'-deoxyinosine + phosphate = 2-deoxy-alpha-D-ribose 1-phosphate + hypoxanthine. The protein operates within purine metabolism; purine nucleoside salvage. In terms of biological role, as part of the purine salvage pathway, catalyzes the phosphorolytic breakdown of the N-glycosidic bond in the beta-(deoxy)ribonucleoside molecules, with the formation of the corresponding free purine bases and pentose-1-phosphate. Preferentially acts on inosine and guanosine, and to a lesser extent on 2'-deoxyinosine and 2'-deoxyguanosine. This Plasmodium vivax (strain Salvador I) protein is Purine nucleoside phosphorylase.